A 434-amino-acid chain; its full sequence is Histidinol dehydrogenase (434 aa).

Residues Tyr-130, Gln-188, and Asn-211 each contribute to the NAD(+) site. Substrate is bound by residues Ser-237, Gln-259, and His-262. The Zn(2+) site is built by Gln-259 and His-262. Residues Glu-326 and His-327 each act as proton acceptor in the active site. Residues His-327, Asp-360, Glu-414, and His-419 each coordinate substrate. Position 360 (Asp-360) interacts with Zn(2+). Zn(2+) is bound at residue His-419.

This sequence belongs to the histidinol dehydrogenase family. In terms of assembly, homodimer. It depends on Zn(2+) as a cofactor.

It catalyses the reaction L-histidinol + 2 NAD(+) + H2O = L-histidine + 2 NADH + 3 H(+). The protein operates within amino-acid biosynthesis; L-histidine biosynthesis; L-histidine from 5-phospho-alpha-D-ribose 1-diphosphate: step 9/9. In terms of biological role, catalyzes the sequential NAD-dependent oxidations of L-histidinol to L-histidinaldehyde and then to L-histidine. This chain is Histidinol dehydrogenase, found in Shigella sonnei (strain Ss046).